The primary structure comprises 309 residues: NAD kinase (309 aa).

Catalysis depends on D89, which acts as the Proton acceptor. Residues 89–90 (DG), 163–164 (NE), H174, R191, D193, and 204–209 (TAYALS) each bind NAD(+).

This sequence belongs to the NAD kinase family. It depends on a divalent metal cation as a cofactor.

The protein localises to the cytoplasm. It catalyses the reaction NAD(+) + ATP = ADP + NADP(+) + H(+). Its function is as follows. Involved in the regulation of the intracellular balance of NAD and NADP, and is a key enzyme in the biosynthesis of NADP. Catalyzes specifically the phosphorylation on 2'-hydroxyl of the adenosine moiety of NAD to yield NADP. The chain is NAD kinase from Shewanella sp. (strain W3-18-1).